Consider the following 334-residue polypeptide: Phospho-N-acetylmuramoyl-pentapeptide-transferase (334 aa).

The next 10 membrane-spanning stretches (helical) occupy residues 2 to 22 (IPVLVAAGVAFLVTLVLGPVV), 55 to 75 (VIFLFGAAAAVLVVAFLPGGV), 78 to 98 (GWIEGLLVLAVALGFGVLGFM), 116 to 136 (EKLLGQVLIAVALAVTAVFVL), 154 to 174 (GLALDLGWWFFLGVTVFVVLA), 187 to 207 (GLAAGTFAVAALAFAMIALVM), 211 to 231 (WVGIVLGALVGGCVGFLCYNF), 236 to 256 (VFMGDTGSLALGGGLSAAAVI), 262 to 282 (FLLIIGGVFVIETLSVIIQVI), and 311 to 331 (VVLTFWTVGLVLAVLGLAGLK).

Belongs to the glycosyltransferase 4 family. MraY subfamily. The cofactor is Mg(2+).

It is found in the cell membrane. It carries out the reaction UDP-N-acetyl-alpha-D-muramoyl-L-alanyl-gamma-D-glutamyl-meso-2,6-diaminopimeloyl-D-alanyl-D-alanine + di-trans,octa-cis-undecaprenyl phosphate = di-trans,octa-cis-undecaprenyl diphospho-N-acetyl-alpha-D-muramoyl-L-alanyl-D-glutamyl-meso-2,6-diaminopimeloyl-D-alanyl-D-alanine + UMP. It functions in the pathway cell wall biogenesis; peptidoglycan biosynthesis. Functionally, catalyzes the initial step of the lipid cycle reactions in the biosynthesis of the cell wall peptidoglycan: transfers peptidoglycan precursor phospho-MurNAc-pentapeptide from UDP-MurNAc-pentapeptide onto the lipid carrier undecaprenyl phosphate, yielding undecaprenyl-pyrophosphoryl-MurNAc-pentapeptide, known as lipid I. This chain is Phospho-N-acetylmuramoyl-pentapeptide-transferase, found in Desulforudis audaxviator (strain MP104C).